A 384-amino-acid chain; its full sequence is Large ribosomal subunit protein uL3m (384 aa).

2 disordered regions span residues 80–101 (NQVT…KRRE) and 237–262 (QEAS…SGSR). Positions 240–249 (SHGNSLNHRT) are enriched in polar residues.

Belongs to the universal ribosomal protein uL3 family. Component of the mitochondrial large ribosomal subunit (mt-LSU). Mature N.crassa 74S mitochondrial ribosomes consist of a small (37S) and a large (54S) subunit. The 37S small subunit contains a 16S ribosomal RNA (16S mt-rRNA) and 32 different proteins. The 54S large subunit contains a 23S rRNA (23S mt-rRNA) and 42 different proteins.

The protein resides in the mitochondrion. Functionally, component of the mitochondrial ribosome (mitoribosome), a dedicated translation machinery responsible for the synthesis of mitochondrial genome-encoded proteins, including at least some of the essential transmembrane subunits of the mitochondrial respiratory chain. The mitoribosomes are attached to the mitochondrial inner membrane and translation products are cotranslationally integrated into the membrane. This Neurospora crassa (strain ATCC 24698 / 74-OR23-1A / CBS 708.71 / DSM 1257 / FGSC 987) protein is Large ribosomal subunit protein uL3m (mrpl9).